We begin with the raw amino-acid sequence, 1024 residues long: Protein sumv-1 (1024 aa).

6 disordered regions span residues aspartate 447–proline 486, asparagine 501–valine 564, proline 577–alanine 617, serine 645–glutamine 664, valine 710–glutamine 739, and alanine 773–leucine 1024. 3 stretches are compositionally biased toward polar residues: residues serine 467–proline 486, asparagine 501–threonine 514, and arginine 528–aspartate 542. Residues serine 584–proline 600 are compositionally biased toward low complexity. Residues glutamine 605–alanine 617 are compositionally biased toward polar residues. Low complexity-rich tracts occupy residues valine 710–serine 730 and alanine 784–serine 809. Positions valine 810–proline 832 are enriched in polar residues. Residues threonine 859–threonine 870 show a composition bias toward low complexity. A compositionally biased stretch (polar residues) spans histidine 873 to threonine 883. Residues proline 903–lysine 914 show a composition bias toward basic and acidic residues. 3 stretches are compositionally biased toward low complexity: residues proline 916–isoleucine 943, serine 952–threonine 962, and leucine 970–alanine 986. The span at isoleucine 987–lysine 998 shows a compositional bias: polar residues.

Its subcellular location is the nucleus. It is found in the cytoplasm. The protein localises to the cell projection. It localises to the axon. Its function is as follows. Nuclear factor that influences the activity of genes involved in vulval development. This is Protein sumv-1 from Caenorhabditis elegans.